A 309-amino-acid chain; its full sequence is tRNA-cytidine(32) 2-sulfurtransferase (309 aa).

The PP-loop motif motif lies at 57-62 (SGGKDS). [4Fe-4S] cluster contacts are provided by Cys132, Cys135, and Cys223.

The protein belongs to the TtcA family. Homodimer. The cofactor is Mg(2+). [4Fe-4S] cluster is required as a cofactor.

It localises to the cytoplasm. It carries out the reaction cytidine(32) in tRNA + S-sulfanyl-L-cysteinyl-[cysteine desulfurase] + AH2 + ATP = 2-thiocytidine(32) in tRNA + L-cysteinyl-[cysteine desulfurase] + A + AMP + diphosphate + H(+). Its pathway is tRNA modification. Its function is as follows. Catalyzes the ATP-dependent 2-thiolation of cytidine in position 32 of tRNA, to form 2-thiocytidine (s(2)C32). The sulfur atoms are provided by the cysteine/cysteine desulfurase (IscS) system. In Variovorax paradoxus (strain S110), this protein is tRNA-cytidine(32) 2-sulfurtransferase.